Consider the following 255-residue polypeptide: Taurine import ATP-binding protein TauB (255 aa).

Residues 2-229 enclose the ABC transporter domain; the sequence is LQISHLYADY…RFVAGESSRS (228 aa). 34–41 contributes to the ATP binding site; sequence GPSGCGKT.

This sequence belongs to the ABC transporter superfamily. Taurine importer (TC 3.A.1.17.1) family. In terms of assembly, the complex is composed of two ATP-binding proteins (TauB), two transmembrane proteins (TauC) and a solute-binding protein (TauA).

The protein resides in the cell inner membrane. The enzyme catalyses taurine(out) + ATP + H2O = taurine(in) + ADP + phosphate + H(+). In terms of biological role, part of the ABC transporter complex TauABC involved in taurine import. Responsible for energy coupling to the transport system. In Shigella dysenteriae serotype 1 (strain Sd197), this protein is Taurine import ATP-binding protein TauB.